A 186-amino-acid chain; its full sequence is Small ribosomal subunit protein uS7 (186 aa).

This sequence belongs to the universal ribosomal protein uS7 family. Part of the 30S ribosomal subunit.

One of the primary rRNA binding proteins, it binds directly to 16S rRNA where it nucleates assembly of the head domain of the 30S subunit. Is located at the subunit interface close to the decoding center. The chain is Small ribosomal subunit protein uS7 from Methanococcoides burtonii (strain DSM 6242 / NBRC 107633 / OCM 468 / ACE-M).